A 247-amino-acid polypeptide reads, in one-letter code: O-methyltransferase imqG (247 aa).

S-adenosyl-L-methionine-binding positions include Glu84, 86–87, and Ala138; that span reads GT. A divalent metal cation-binding residues include Asp163, Asp189, and Asn190. Asp163 lines the substrate pocket.

The protein belongs to the class I-like SAM-binding methyltransferase superfamily. Cation-dependent O-methyltransferase family. CCoAMT subfamily. Homodimer. Requires a divalent metal cation as cofactor.

Its pathway is secondary metabolite biosynthesis. In terms of biological role, O-methyltransferase; part of the gene cluster that mediates the biosynthesis of imizoquins A to D, tripeptide-derived alkaloids that serve a protective role against oxidative stress that are essential for normal germination. ImqB is a canonical three-module NRPS that assembles the tripeptide backbone of the imizoquins via condensation of Trp, Tyr, and Leu-derived precursors. N-methylation by imqF and phenol oxidation by imqC, followed by cyclization via the FAD-dependent oxidase imqH carry out the three-step transformation of L-tyrosine into tetrahydroisoquinoline. Importantly, this sequence requires the presence of a free amine in the tyrosine moiety, indicating that isoquinoline formation occurs prior to peptide bond formation. The imidazolidin-4-one ring of imizoquins could form following additional oxidation of the methyl-derived bridgehead carbon by imqH. Lastly, O-methylation by imqG and leucine hydroxylation by imqE complete biosynthesis of the imizoquins. In Aspergillus flavus (strain ATCC 200026 / FGSC A1120 / IAM 13836 / NRRL 3357 / JCM 12722 / SRRC 167), this protein is O-methyltransferase imqG.